Consider the following 91-residue polypeptide: DNA-directed RNA polymerase subunit Rpo11 (91 aa).

Belongs to the archaeal Rpo11/eukaryotic RPB11/RPC19 RNA polymerase subunit family. Part of the RNA polymerase complex.

The protein localises to the cytoplasm. The catalysed reaction is RNA(n) + a ribonucleoside 5'-triphosphate = RNA(n+1) + diphosphate. DNA-dependent RNA polymerase (RNAP) catalyzes the transcription of DNA into RNA using the four ribonucleoside triphosphates as substrates. The sequence is that of DNA-directed RNA polymerase subunit Rpo11 from Methanothrix thermoacetophila (strain DSM 6194 / JCM 14653 / NBRC 101360 / PT) (Methanosaeta thermophila).